The sequence spans 262 residues: 3-methyl-2-oxobutanoate hydroxymethyltransferase (262 aa).

Mg(2+)-binding residues include Asp-31 and Asp-70. Residues 31 to 32 (DS), Asp-70, and Lys-99 each bind 3-methyl-2-oxobutanoate. Glu-101 serves as a coordination point for Mg(2+). The active-site Proton acceptor is the Glu-168.

The protein belongs to the PanB family. As to quaternary structure, homodecamer; pentamer of dimers. Mg(2+) is required as a cofactor.

It localises to the cytoplasm. It catalyses the reaction 3-methyl-2-oxobutanoate + (6R)-5,10-methylene-5,6,7,8-tetrahydrofolate + H2O = 2-dehydropantoate + (6S)-5,6,7,8-tetrahydrofolate. Its pathway is cofactor biosynthesis; coenzyme A biosynthesis. Its function is as follows. Catalyzes the reversible reaction in which hydroxymethyl group from 5,10-methylenetetrahydrofolate is transferred onto alpha-ketoisovalerate to form ketopantoate. The polypeptide is 3-methyl-2-oxobutanoate hydroxymethyltransferase (Cenarchaeum symbiosum (strain A)).